A 378-amino-acid polypeptide reads, in one-letter code: Erythronate-4-phosphate dehydrogenase (378 aa).

Ser-45 and Thr-66 together coordinate substrate. The NAD(+) site is built by Asp-146 and Thr-175. Residue Arg-208 is part of the active site. Residue Asp-232 coordinates NAD(+). The active site involves Glu-237. His-254 functions as the Proton donor in the catalytic mechanism. NAD(+) is bound at residue Gly-257. Residue Tyr-258 coordinates substrate.

The protein belongs to the D-isomer specific 2-hydroxyacid dehydrogenase family. PdxB subfamily. As to quaternary structure, homodimer.

It localises to the cytoplasm. It carries out the reaction 4-phospho-D-erythronate + NAD(+) = (R)-3-hydroxy-2-oxo-4-phosphooxybutanoate + NADH + H(+). It participates in cofactor biosynthesis; pyridoxine 5'-phosphate biosynthesis; pyridoxine 5'-phosphate from D-erythrose 4-phosphate: step 2/5. In terms of biological role, catalyzes the oxidation of erythronate-4-phosphate to 3-hydroxy-2-oxo-4-phosphonooxybutanoate. This is Erythronate-4-phosphate dehydrogenase from Escherichia coli (strain 55989 / EAEC).